Here is a 318-residue protein sequence, read N- to C-terminus: Ribosomal RNA small subunit methyltransferase H (318 aa).

S-adenosyl-L-methionine-binding positions include 34–36, aspartate 57, leucine 91, aspartate 110, and glutamine 117; that span reads GGH.

Belongs to the methyltransferase superfamily. RsmH family.

It localises to the cytoplasm. It catalyses the reaction cytidine(1402) in 16S rRNA + S-adenosyl-L-methionine = N(4)-methylcytidine(1402) in 16S rRNA + S-adenosyl-L-homocysteine + H(+). In terms of biological role, specifically methylates the N4 position of cytidine in position 1402 (C1402) of 16S rRNA. The polypeptide is Ribosomal RNA small subunit methyltransferase H (Chlorobaculum parvum (strain DSM 263 / NCIMB 8327) (Chlorobium vibrioforme subsp. thiosulfatophilum)).